Here is a 113-residue protein sequence, read N- to C-terminus: Gonadotropin subunit beta (113 aa).

Cystine bridges form between Cys6–Cys54, Cys20–Cys69, Cys23–Cys107, Cys31–Cys85, Cys35–Cys87, and Cys90–Cys97. Asn10 is a glycosylation site (N-linked (GlcNAc...) asparagine).

This sequence belongs to the glycoprotein hormones subunit beta family. Heterodimer of an alpha and a beta chain.

The protein localises to the secreted. Involved in gametogenesis and steroidogenesis. The protein is Gonadotropin subunit beta (cgb) of Muraenesox cinereus (Daggertooth pike conger).